A 286-amino-acid chain; its full sequence is Urease accessory protein UreD 2 (286 aa).

The protein belongs to the UreD family. In terms of assembly, ureD, UreF and UreG form a complex that acts as a GTP-hydrolysis-dependent molecular chaperone, activating the urease apoprotein by helping to assemble the nickel containing metallocenter of UreC. The UreE protein probably delivers the nickel.

The protein localises to the cytoplasm. Functionally, required for maturation of urease via the functional incorporation of the urease nickel metallocenter. The polypeptide is Urease accessory protein UreD 2 (Bradyrhizobium sp. (strain BTAi1 / ATCC BAA-1182)).